The primary structure comprises 421 residues: Fusaric acid cluster transcription factor FUB10 (421 aa).

Positions 16-47 form a DNA-binding region, zn(2)-C6 fungal-type; sequence CDRCRAQKLRCHRDSGHSTDACLRCLKSGIEC. Positions 50–92 are disordered; sequence SKARPTGRPPSRQVQPTVVVEQGDTSSSSHTTDSSPSAGGTDM. Positions 74 to 86 are enriched in low complexity; the sequence is TSSSSHTTDSSPS.

The protein localises to the nucleus. In terms of biological role, transcription factor that regulates the expression of the gene cluster that mediates the biosynthesis of fusaric acid, a mycotoxin with low to moderate toxicity to animals and humans, but with high phytotoxic properties. This Gibberella moniliformis (strain M3125 / FGSC 7600) (Maize ear and stalk rot fungus) protein is Fusaric acid cluster transcription factor FUB10.